Here is a 190-residue protein sequence, read N- to C-terminus: Holliday junction branch migration complex subunit RuvA (190 aa).

The interval 1 to 64 (MIGKLTGTLL…EDAQLLYGFG (64 aa)) is domain I. Positions 65 to 137 (TAQERQAFRE…LKGKLGADVG (73 aa)) are domain II. The tract at residues 137–141 (GVRAH) is flexible linker. Positions 142–190 (AANDNQADILQALLALGYNDKEAAAALKALPADVGVSEGIKLALKSLSK) are domain III.

It belongs to the RuvA family. Homotetramer. Forms an RuvA(8)-RuvB(12)-Holliday junction (HJ) complex. HJ DNA is sandwiched between 2 RuvA tetramers; dsDNA enters through RuvA and exits via RuvB. An RuvB hexamer assembles on each DNA strand where it exits the tetramer. Each RuvB hexamer is contacted by two RuvA subunits (via domain III) on 2 adjacent RuvB subunits; this complex drives branch migration. In the full resolvosome a probable DNA-RuvA(4)-RuvB(12)-RuvC(2) complex forms which resolves the HJ.

The protein resides in the cytoplasm. Functionally, the RuvA-RuvB-RuvC complex processes Holliday junction (HJ) DNA during genetic recombination and DNA repair, while the RuvA-RuvB complex plays an important role in the rescue of blocked DNA replication forks via replication fork reversal (RFR). RuvA specifically binds to HJ cruciform DNA, conferring on it an open structure. The RuvB hexamer acts as an ATP-dependent pump, pulling dsDNA into and through the RuvAB complex. HJ branch migration allows RuvC to scan DNA until it finds its consensus sequence, where it cleaves and resolves the cruciform DNA. This chain is Holliday junction branch migration complex subunit RuvA, found in Acidovorax ebreus (strain TPSY) (Diaphorobacter sp. (strain TPSY)).